A 163-amino-acid polypeptide reads, in one-letter code: Nucleotide-binding protein PM1656 (163 aa).

This sequence belongs to the YajQ family.

Its function is as follows. Nucleotide-binding protein. The sequence is that of Nucleotide-binding protein PM1656 from Pasteurella multocida (strain Pm70).